Consider the following 135-residue polypeptide: Small ribosomal subunit protein uS12 (135 aa).

The residue at position 89 (D89) is a 3-methylthioaspartic acid. The interval 101–135 (SLDTSGVADRKQSRSKYGAKQPKAGAAAPAKGKGR) is disordered. Residues 118-135 (GAKQPKAGAAAPAKGKGR) are compositionally biased toward low complexity.

The protein belongs to the universal ribosomal protein uS12 family. As to quaternary structure, part of the 30S ribosomal subunit. Contacts proteins S8 and S17. May interact with IF1 in the 30S initiation complex.

In terms of biological role, with S4 and S5 plays an important role in translational accuracy. Interacts with and stabilizes bases of the 16S rRNA that are involved in tRNA selection in the A site and with the mRNA backbone. Located at the interface of the 30S and 50S subunits, it traverses the body of the 30S subunit contacting proteins on the other side and probably holding the rRNA structure together. The combined cluster of proteins S8, S12 and S17 appears to hold together the shoulder and platform of the 30S subunit. This is Small ribosomal subunit protein uS12 from Chlorobium limicola (strain DSM 245 / NBRC 103803 / 6330).